We begin with the raw amino-acid sequence, 469 residues long: MNPNQKIITIGSICMVVGIISLILQIGNIISIWISHSIQTGSQNHTGICNQSIITYKNSTWVNQTYVNISNTNVVAGQDTTSVILTGNSSLCPIRGWAIYSKDNGIRIGSKGDVFVIREPFISCSHLECRTFFLTQGALLNDKHSNGTVKDRSPYRALMSCPVGEAPSPYNSRFESVAWSASACHDGMGWLTIGISGPDNEAVAVLKYNGIITETIKSWRKKILRTQESECACVNGSCFTIMTDGPSDGLASYKIFKIEKGKVTKSIELNAPNSHYEECSCYPDTGKVMCVCRDNWHGSNRPWVSFDQNLDYQIGYICSGVFGDNPRPKDGTGSCGPVYVDGANGVKGFSYRYGNGVWIGRTKSTSSRHGFEMIWDPNGWTETDSKFSVRQDVVAMTDWSGYSGSFVQHPELTGLDCMRPCFWVELIRGQPKEKTIWTSGSSISFCGVNSDTVDWSWPDGAELPFTIDK.

Topologically, residues 1 to 6 are intravirion; that stretch reads MNPNQK. A helical transmembrane segment spans residues 7 to 27; it reads IITIGSICMVVGIISLILQIG. The interval 11–33 is involved in apical transport and lipid raft association; that stretch reads GSICMVVGIISLILQIGNIISIW. Topologically, residues 28–469 are virion surface; the sequence is NIISIWISHS…GAELPFTIDK (442 aa). The hypervariable stalk region stretch occupies residues 36–90; that stretch reads HSIQTGSQNHTGICNQSIITYKNSTWVNQTYVNISNTNVVAGQDTTSVILTGNSS. Asparagine 44, asparagine 50, asparagine 58, asparagine 63, asparagine 68, and asparagine 88 each carry an N-linked (GlcNAc...) asparagine; by host glycan. The tract at residues 91–469 is head of neuraminidase; that stretch reads LCPIRGWAIY…GAELPFTIDK (379 aa). 8 disulfide bridges follow: cysteine 92/cysteine 417, cysteine 124/cysteine 129, cysteine 184/cysteine 231, cysteine 233/cysteine 238, cysteine 279/cysteine 292, cysteine 281/cysteine 290, cysteine 318/cysteine 335, and cysteine 421/cysteine 446. Residue arginine 118 coordinates substrate. Asparagine 146 carries N-linked (GlcNAc...) asparagine; by host glycosylation. Residue aspartate 151 is the Proton donor/acceptor of the active site. Substrate is bound at residue arginine 152. Asparagine 235 carries N-linked (GlcNAc...) asparagine; by host glycosylation. 277-278 contributes to the substrate binding site; it reads EE. Arginine 293 lines the substrate pocket. Ca(2+) contacts are provided by aspartate 294, glycine 298, aspartate 324, and asparagine 344. A substrate-binding site is contributed by arginine 368. The Nucleophile role is filled by tyrosine 402.

This sequence belongs to the glycosyl hydrolase 34 family. Homotetramer. Ca(2+) is required as a cofactor. In terms of processing, N-glycosylated.

Its subcellular location is the virion membrane. It localises to the host apical cell membrane. The catalysed reaction is Hydrolysis of alpha-(2-&gt;3)-, alpha-(2-&gt;6)-, alpha-(2-&gt;8)- glycosidic linkages of terminal sialic acid residues in oligosaccharides, glycoproteins, glycolipids, colominic acid and synthetic substrates.. Its activity is regulated as follows. Inhibited by the neuraminidase inhibitors zanamivir (Relenza) and oseltamivir (Tamiflu). These drugs interfere with the release of progeny virus from infected cells and are effective against all influenza strains. Resistance to neuraminidase inhibitors is quite rare. Catalyzes the removal of terminal sialic acid residues from viral and cellular glycoconjugates. Cleaves off the terminal sialic acids on the glycosylated HA during virus budding to facilitate virus release. Additionally helps virus spread through the circulation by further removing sialic acids from the cell surface. These cleavages prevent self-aggregation and ensure the efficient spread of the progeny virus from cell to cell. Otherwise, infection would be limited to one round of replication. Described as a receptor-destroying enzyme because it cleaves a terminal sialic acid from the cellular receptors. May facilitate viral invasion of the upper airways by cleaving the sialic acid moieties on the mucin of the airway epithelial cells. Likely to plays a role in the budding process through its association with lipid rafts during intracellular transport. May additionally display a raft-association independent effect on budding. Plays a role in the determination of host range restriction on replication and virulence. Sialidase activity in late endosome/lysosome traffic seems to enhance virus replication. The chain is Neuraminidase from Aves (Human).